The chain runs to 928 residues: 2-oxoglutarate dehydrogenase E1 component (928 aa).

It belongs to the alpha-ketoglutarate dehydrogenase family. In terms of assembly, homodimer. Part of the 2-oxoglutarate dehydrogenase (OGDH) complex composed of E1 (2-oxoglutarate dehydrogenase), E2 (dihydrolipoamide succinyltransferase) and E3 (dihydrolipoamide dehydrogenase); the complex contains multiple copies of the three enzymatic components (E1, E2 and E3). The cofactor is thiamine diphosphate.

It catalyses the reaction N(6)-[(R)-lipoyl]-L-lysyl-[protein] + 2-oxoglutarate + H(+) = N(6)-[(R)-S(8)-succinyldihydrolipoyl]-L-lysyl-[protein] + CO2. In terms of biological role, E1 component of the 2-oxoglutarate dehydrogenase (OGDH) complex which catalyzes the decarboxylation of 2-oxoglutarate, the first step in the conversion of 2-oxoglutarate to succinyl-CoA and CO(2). This chain is 2-oxoglutarate dehydrogenase E1 component (sucA), found in Rickettsia conorii (strain ATCC VR-613 / Malish 7).